A 230-amino-acid chain; its full sequence is Sugar fermentation stimulation protein homolog (230 aa).

The protein belongs to the SfsA family.

The sequence is that of Sugar fermentation stimulation protein homolog from Clostridium tetani (strain Massachusetts / E88).